The chain runs to 213 residues: Thymidylate kinase (213 aa).

Residue 10–17 (GLEGAGKT) coordinates ATP.

It belongs to the thymidylate kinase family.

The enzyme catalyses dTMP + ATP = dTDP + ADP. In terms of biological role, phosphorylation of dTMP to form dTDP in both de novo and salvage pathways of dTTP synthesis. The chain is Thymidylate kinase from Escherichia coli O157:H7 (strain EC4115 / EHEC).